The sequence spans 81 residues: ATP synthase subunit c, chloroplastic (81 aa).

A run of 2 helical transmembrane segments spans residues 3–23 (PLIASASVIAAGLAVGLASIG) and 57–77 (LAFMEALTIYGLVVALALLFA).

The protein belongs to the ATPase C chain family. F-type ATPases have 2 components, F(1) - the catalytic core - and F(0) - the membrane proton channel. F(1) has five subunits: alpha(3), beta(3), gamma(1), delta(1), epsilon(1). F(0) has four main subunits: a(1), b(1), b'(1) and c(10-14). The alpha and beta chains form an alternating ring which encloses part of the gamma chain. F(1) is attached to F(0) by a central stalk formed by the gamma and epsilon chains, while a peripheral stalk is formed by the delta, b and b' chains.

It localises to the plastid. It is found in the chloroplast thylakoid membrane. In terms of biological role, f(1)F(0) ATP synthase produces ATP from ADP in the presence of a proton or sodium gradient. F-type ATPases consist of two structural domains, F(1) containing the extramembraneous catalytic core and F(0) containing the membrane proton channel, linked together by a central stalk and a peripheral stalk. During catalysis, ATP synthesis in the catalytic domain of F(1) is coupled via a rotary mechanism of the central stalk subunits to proton translocation. Key component of the F(0) channel; it plays a direct role in translocation across the membrane. A homomeric c-ring of between 10-14 subunits forms the central stalk rotor element with the F(1) delta and epsilon subunits. The chain is ATP synthase subunit c, chloroplastic from Chaetosphaeridium globosum (Charophycean green alga).